The primary structure comprises 1442 residues: Death-associated protein kinase 1 (1442 aa).

One can recognise a Protein kinase domain in the interval 13-275 (YDTGEELGSG…IQDSLQHPWI (263 aa)). ATP contacts are provided by residues 19-27 (LGSGQFAVV) and Lys42. Asp139 acts as the Proton acceptor in catalysis. Residues 267 to 334 (QDSLQHPWIK…RSNMSVARSD (68 aa)) are calmodulin-binding. Ser289 is modified (phosphoserine; by RPS6KA1 and RPS6KA3). Residues 292–301 (NMEKFKKFAA) form an autoinhibitory domain region. Ser308 carries the phosphoserine; by autocatalysis modification. 2 positions are modified to phosphoserine: Ser319 and Ser333. 8 ANK repeats span residues 378-407 (HGTP…RIDV), 411-440 (GGSN…PLDV), 444-473 (SGET…NPDF), 477-506 (EEET…NVNI), 510-539 (EGET…DLNA), 543-572 (DGHI…FVDF), 576-605 (HGNT…NLDI), and 609-638 (YGRT…NVEA). The 275-residue stretch at 681–955 (TQNLQPRIKL…NHLQEIRSQI (275 aa)) folds into the Roc domain. Ser734 is modified (phosphoserine; by MAPK1). Residues 875–904 (KLKNPLRVVLVATHADIMNIPRPAGGEFGY) form an ANK 9 repeat. The residue at position 1115 (Ser1115) is a Phosphoserine. An ANK 10 repeat occupies 1164–1196 (DADIRLWVSGCRIANRGAELLVLLVNHGQGIEV). The 85-residue stretch at 1312-1396 (KLSRLLDPPD…DAADFLLKAS (85 aa)) folds into the Death domain. Ser1433 bears the Phosphoserine mark.

This sequence belongs to the protein kinase superfamily. CAMK Ser/Thr protein kinase family. DAP kinase subfamily. Interacts with KLHL20. Interacts (via death domain) with MAPK1 and MAPK3. Interacts with MAP1B (via N-terminus). Interacts with PRKD1 in an oxidative stress-regulated manner. Interacts with PIN1, PDCD6, BECN1, TSC2 and STX1A. Interacts (via kinase domain) with DAPK3 (via kinase domain). Interacts with GRINB. Interacts (via death domain) with UNC5B (via death domain). Interacts with UNC5C (via death domain). Requires Mg(2+) as cofactor. Post-translationally, ubiquitinated by the BCR(KLHL20) E3 ubiquitin ligase complex, leading to its degradation by the proteasome. In terms of processing, in response to mitogenic stimulation (PMA or EGF), phosphorylated at Ser-289; phosphorylation suppresses DAPK1 pro-apoptotic function. Autophosphorylation at Ser-308 inhibits its catalytic activity. Phosphorylation at Ser-734 by MAPK1 increases its catalytic activity and promotes cytoplasmic retention of MAPK1. Endoplasmic-stress can cause dephosphorylation at Ser-308. As to expression, high levels in bladder, uterus, vas deferens, lung, liver and kidney.

The catalysed reaction is L-seryl-[protein] + ATP = O-phospho-L-seryl-[protein] + ADP + H(+). It catalyses the reaction L-threonyl-[protein] + ATP = O-phospho-L-threonyl-[protein] + ADP + H(+). Activated by Ca(2+)/calmodulin. Regulated by a locking mechanism, involving autophosphorylation at Ser-308 and calmodulin binding. In the inactive state, Ser-308 is phosphorylated. Activation involves its dephosphorylation and a release-of-autoinhibition mechanism where binding of calmodulin induces a conformational change that relieves the steric block of the active site by the autoinhibitory domain. Activity is modulated by UNC5B and NTN1. UNC5B activates it by inhibiting the phosphorylation at Ser-308, whereas NTN1 inhibits UNC5B-mediated activation of DAPK1. Endoplasmic-stress activates by causing Ser-308 dephosphorylation. Its function is as follows. Calcium/calmodulin-dependent serine/threonine kinase involved in multiple cellular signaling pathways that trigger cell survival, apoptosis, and autophagy. Regulates both type I apoptotic and type II autophagic cell deaths signal, depending on the cellular setting. The former is caspase-dependent, while the latter is caspase-independent and is characterized by the accumulation of autophagic vesicles. Phosphorylates PIN1 resulting in inhibition of its catalytic activity, nuclear localization, and cellular function. Phosphorylates TPM1, enhancing stress fiber formation in endothelial cells. Phosphorylates STX1A and significantly decreases its binding to STXBP1. Phosphorylates PRKD1 and regulates JNK signaling by binding and activating PRKD1 under oxidative stress. Phosphorylates BECN1, reducing its interaction with BCL2 and BCL2L1 and promoting the induction of autophagy. Phosphorylates TSC2, disrupting the TSC1-TSC2 complex and stimulating mTORC1 activity in a growth factor-dependent pathway. Phosphorylates RPS6, MYL9 and DAPK3. Acts as a signaling amplifier of NMDA receptors at extrasynaptic sites for mediating brain damage in stroke. Cerebral ischemia recruits DAPK1 into the NMDA receptor complex and it phosphorylates GRINB at Ser-1303 inducing injurious Ca(2+) influx through NMDA receptor channels, resulting in an irreversible neuronal death. Required together with DAPK3 for phosphorylation of RPL13A upon interferon-gamma activation which is causing RPL13A involvement in transcript-selective translation inhibition. The chain is Death-associated protein kinase 1 (Dapk1) from Mus musculus (Mouse).